The primary structure comprises 235 residues: Pyridoxine 5'-phosphate synthase (235 aa).

Asn-7 serves as a coordination point for 3-amino-2-oxopropyl phosphate. Residue 9–10 (DH) participates in 1-deoxy-D-xylulose 5-phosphate binding. Arg-18 contributes to the 3-amino-2-oxopropyl phosphate binding site. Residue His-43 is the Proton acceptor of the active site. Residues Arg-45 and His-50 each coordinate 1-deoxy-D-xylulose 5-phosphate. The active-site Proton acceptor is Glu-70. Position 100 (Thr-100) interacts with 1-deoxy-D-xylulose 5-phosphate. His-187 acts as the Proton donor in catalysis. 3-amino-2-oxopropyl phosphate contacts are provided by residues Gly-188 and 209-210 (GH).

Belongs to the PNP synthase family. In terms of assembly, homooctamer; tetramer of dimers.

It localises to the cytoplasm. The catalysed reaction is 3-amino-2-oxopropyl phosphate + 1-deoxy-D-xylulose 5-phosphate = pyridoxine 5'-phosphate + phosphate + 2 H2O + H(+). It participates in cofactor biosynthesis; pyridoxine 5'-phosphate biosynthesis; pyridoxine 5'-phosphate from D-erythrose 4-phosphate: step 5/5. Its function is as follows. Catalyzes the complicated ring closure reaction between the two acyclic compounds 1-deoxy-D-xylulose-5-phosphate (DXP) and 3-amino-2-oxopropyl phosphate (1-amino-acetone-3-phosphate or AAP) to form pyridoxine 5'-phosphate (PNP) and inorganic phosphate. This chain is Pyridoxine 5'-phosphate synthase, found in Desulfatibacillum aliphaticivorans.